The chain runs to 345 residues: 3-isopropylmalate dehydrogenase (345 aa).

74–87 (GPKWDGLPRKISPE) is an NAD(+) binding site. Residues R94, R104, R132, and D217 each contribute to the substrate site. The Mg(2+) site is built by D217, D241, and D245. 274-286 (GSAPDIAGKGIAN) serves as a coordination point for NAD(+).

This sequence belongs to the isocitrate and isopropylmalate dehydrogenases family. LeuB type 1 subfamily. Homodimer. The cofactor is Mg(2+). It depends on Mn(2+) as a cofactor.

Its subcellular location is the cytoplasm. The enzyme catalyses (2R,3S)-3-isopropylmalate + NAD(+) = 4-methyl-2-oxopentanoate + CO2 + NADH. It participates in amino-acid biosynthesis; L-leucine biosynthesis; L-leucine from 3-methyl-2-oxobutanoate: step 3/4. In terms of biological role, catalyzes the oxidation of 3-carboxy-2-hydroxy-4-methylpentanoate (3-isopropylmalate) to 3-carboxy-4-methyl-2-oxopentanoate. The product decarboxylates to 4-methyl-2 oxopentanoate. This Thermus thermophilus protein is 3-isopropylmalate dehydrogenase (leuB).